The chain runs to 732 residues: Integrator complex subunit 13 (732 aa).

The segment covering Pro-564–Lys-648 has biased composition (basic and acidic residues). The tract at residues Pro-564–Pro-650 is disordered. Residues Lys-572–Asp-582 carry the Nuclear localization signal (NLS) motif. A Glycyl lysine isopeptide (Lys-Gly) (interchain with G-Cter in SUMO2) cross-link involves residue Lys-611. Phosphoserine occurs at positions 623, 626, and 678. Residues Gly-649–Gly-694 form a cleavage module binding motif (CMBM) region.

The protein belongs to the Integrator subunit 13 family. As to quaternary structure, component of the Integrator complex, composed of core subunits INTS1, INTS2, INTS3, INTS4, INTS5, INTS6, INTS7, INTS8, INTS9/RC74, INTS10, INTS11/CPSF3L, INTS12, INTS13, INTS14 and INTS15. The core complex associates with protein phosphatase 2A subunits PPP2CA and PPP2R1A, to form the Integrator-PP2A (INTAC) complex. INTS13 is part of the tail subcomplex, composed of INTS10, INTS13, INTS14 and INTS15. Interacts with transcription factors ZNF609 and ZNF655. Interacts with PAFAH1B1; this interaction may be required for proper recruitment of dynein complexes to the nuclear envelope at prophase.

It localises to the nucleus. It is found in the cytoplasm. Functionally, component of the integrator complex, a multiprotein complex that terminates RNA polymerase II (Pol II) transcription in the promoter-proximal region of genes. The integrator complex provides a quality checkpoint during transcription elongation by driving premature transcription termination of transcripts that are unfavorably configured for transcriptional elongation: the complex terminates transcription by (1) catalyzing dephosphorylation of the C-terminal domain (CTD) of Pol II subunit POLR2A/RPB1 and SUPT5H/SPT5, (2) degrading the exiting nascent RNA transcript via endonuclease activity and (3) promoting the release of Pol II from bound DNA. The integrator complex is also involved in terminating the synthesis of non-coding Pol II transcripts, such as enhancer RNAs (eRNAs), small nuclear RNAs (snRNAs), telomerase RNAs and long non-coding RNAs (lncRNAs). Within the integrator complex, INTS13 is part of the integrator tail module and acts as a platform for the recruitment of transcription factors at promoters. At prophase, mediates recruitment of cytoplasmic dynein to the nuclear envelope, a step important for proper centrosome-nucleus coupling. At G2/M phase, may be required for proper spindle formation and execution of cytokinesis. The protein is Integrator complex subunit 13 of Mus musculus (Mouse).